The sequence spans 464 residues: tRNA modification GTPase MnmE (464 aa).

(6S)-5-formyl-5,6,7,8-tetrahydrofolate contacts are provided by arginine 29, glutamate 91, and arginine 131. A TrmE-type G domain is found at 226–387 (GLKVALAGKP…LINYLLKKCG (162 aa)). Asparagine 236 contacts K(+). GTP is bound by residues 236-241 (NVGKSS), 255-261 (TDLPGTT), and 280-283 (DTAG). Serine 240 is a Mg(2+) binding site. Positions 255, 257, and 260 each coordinate K(+). A Mg(2+)-binding site is contributed by threonine 261. (6S)-5-formyl-5,6,7,8-tetrahydrofolate is bound at residue lysine 464.

It belongs to the TRAFAC class TrmE-Era-EngA-EngB-Septin-like GTPase superfamily. TrmE GTPase family. Homodimer. Heterotetramer of two MnmE and two MnmG subunits. It depends on K(+) as a cofactor.

Its subcellular location is the cytoplasm. Exhibits a very high intrinsic GTPase hydrolysis rate. Involved in the addition of a carboxymethylaminomethyl (cmnm) group at the wobble position (U34) of certain tRNAs, forming tRNA-cmnm(5)s(2)U34. In Prochlorococcus marinus (strain NATL1A), this protein is tRNA modification GTPase MnmE.